Consider the following 201-residue polypeptide: 3-isopropylmalate dehydratase small subunit (201 aa).

Belongs to the LeuD family. LeuD type 1 subfamily. As to quaternary structure, heterodimer of LeuC and LeuD.

The enzyme catalyses (2R,3S)-3-isopropylmalate = (2S)-2-isopropylmalate. It functions in the pathway amino-acid biosynthesis; L-leucine biosynthesis; L-leucine from 3-methyl-2-oxobutanoate: step 2/4. Its function is as follows. Catalyzes the isomerization between 2-isopropylmalate and 3-isopropylmalate, via the formation of 2-isopropylmaleate. The chain is 3-isopropylmalate dehydratase small subunit from Shewanella sp. (strain MR-4).